The sequence spans 311 residues: Putative methylthioribose-1-phosphate isomerase (311 aa).

Residues 46 to 48 (RGA), Arg80, and Gln174 each bind substrate. Asp215 (proton donor) is an active-site residue. 224 to 225 (NK) provides a ligand contact to substrate.

It belongs to the eIF-2B alpha/beta/delta subunits family. MtnA subfamily.

The catalysed reaction is 5-(methylsulfanyl)-alpha-D-ribose 1-phosphate = 5-(methylsulfanyl)-D-ribulose 1-phosphate. Functionally, catalyzes the interconversion of methylthioribose-1-phosphate (MTR-1-P) into methylthioribulose-1-phosphate (MTRu-1-P). The chain is Putative methylthioribose-1-phosphate isomerase from Methanothermobacter thermautotrophicus (strain ATCC 29096 / DSM 1053 / JCM 10044 / NBRC 100330 / Delta H) (Methanobacterium thermoautotrophicum).